A 1075-amino-acid polypeptide reads, in one-letter code: Protein nervous wreck (1075 aa).

The F-BAR domain maps to 11–289 (VKFLKNLHTE…QAQQLTREYN (279 aa)). 2 disordered regions span residues 361–381 (LRDS…LDTK) and 431–536 (SASS…DEPI). The segment covering 431–453 (SASSISMRTDASGQGENPSSDSF) has biased composition (polar residues). Residues 469–482 (PKQEQQLSRDRTFS) are compositionally biased toward basic and acidic residues. A compositionally biased stretch (low complexity) spans 493-512 (SAAAASSAAAASSSMMASSA). SH3 domains lie at 542–603 (EAIF…IDQE) and 658–721 (SDVE…ECDE). 3 disordered regions span residues 722–747 (MGEP…LPPA), 769–837 (SQDT…EKGA), and 864–917 (GADK…EGNA). Composition is skewed to pro residues over residues 733–747 (SPPP…LPPA) and 809–818 (QPPPSLPPPQ). Positions 819 to 837 (LAKAGGSAPGSGSKVEKGA) are enriched in low complexity. Positions 883 to 897 (VSKEQPAEVAKKPDI) are enriched in basic and acidic residues.

In terms of assembly, homodimer. Interacts (via SH3 domain 1) with WASp. Interacts (via SH3 domain 1) with shi/dynamin. Interacts (via SH3 domain 2) with Dap160. Interacts (via F-BAR domain) with SH3PX1. Interacts (via SH3 domain 2) with Snx16. Identified in a complex with Syn and Syt1. As to expression, detected in larval body wall muscle. Detected at the neuromuscular junction, on motoneuron axons and axon terminals, at synaptic boutons in the periactive zone surrounding the synapse (at protein level). Detected on motoneuron axons and axon terminals, at synaptic boutons in the periactive zone surrounding the synapse.

The protein localises to the endomembrane system. Its subcellular location is the synapse. It is found in the cell projection. The protein resides in the axon. It localises to the presynaptic cell membrane. The protein localises to the cytoplasmic vesicle. Its subcellular location is the secretory vesicle. It is found in the synaptic vesicle. The protein resides in the recycling endosome. In terms of biological role, adapter protein that provides a link between vesicular membrane traffic and the actin assembly machinery. Acts together with Cdc42 to stimulate actin nucleation mediated by WASp and the ARP2/3 complex. Binds to membranes enriched in phosphatidylinositol 4,5-bisphosphate and causes local membrane deformation. Required for normal structure and function of synapses at the neuromuscular junction. Plays a role in synaptic vesicle trafficking. Required for the release of a normal number of synaptic vesicles per action potential. This is Protein nervous wreck from Drosophila melanogaster (Fruit fly).